The chain runs to 556 residues: Arginine--tRNA ligase (556 aa).

The short motif at Ala132–His142 is the 'HIGH' region element.

This sequence belongs to the class-I aminoacyl-tRNA synthetase family. Monomer.

The protein localises to the cytoplasm. The enzyme catalyses tRNA(Arg) + L-arginine + ATP = L-arginyl-tRNA(Arg) + AMP + diphosphate. The sequence is that of Arginine--tRNA ligase from Shouchella clausii (strain KSM-K16) (Alkalihalobacillus clausii).